The primary structure comprises 282 residues: Phosphatidylserine decarboxylase proenzyme (282 aa).

Residues Asp-88, His-144, and Ser-247 each act as charge relay system; for autoendoproteolytic cleavage activity in the active site. Ser-247 acts as the Schiff-base intermediate with substrate; via pyruvic acid; for decarboxylase activity in catalysis. A Pyruvic acid (Ser); by autocatalysis modification is found at Ser-247.

Belongs to the phosphatidylserine decarboxylase family. PSD-B subfamily. Prokaryotic type I sub-subfamily. Heterodimer of a large membrane-associated beta subunit and a small pyruvoyl-containing alpha subunit. Requires pyruvate as cofactor. Post-translationally, is synthesized initially as an inactive proenzyme. Formation of the active enzyme involves a self-maturation process in which the active site pyruvoyl group is generated from an internal serine residue via an autocatalytic post-translational modification. Two non-identical subunits are generated from the proenzyme in this reaction, and the pyruvate is formed at the N-terminus of the alpha chain, which is derived from the carboxyl end of the proenzyme. The autoendoproteolytic cleavage occurs by a canonical serine protease mechanism, in which the side chain hydroxyl group of the serine supplies its oxygen atom to form the C-terminus of the beta chain, while the remainder of the serine residue undergoes an oxidative deamination to produce ammonia and the pyruvoyl prosthetic group on the alpha chain. During this reaction, the Ser that is part of the protease active site of the proenzyme becomes the pyruvoyl prosthetic group, which constitutes an essential element of the active site of the mature decarboxylase.

Its subcellular location is the cell membrane. It catalyses the reaction a 1,2-diacyl-sn-glycero-3-phospho-L-serine + H(+) = a 1,2-diacyl-sn-glycero-3-phosphoethanolamine + CO2. The protein operates within phospholipid metabolism; phosphatidylethanolamine biosynthesis; phosphatidylethanolamine from CDP-diacylglycerol: step 2/2. Functionally, catalyzes the formation of phosphatidylethanolamine (PtdEtn) from phosphatidylserine (PtdSer). This chain is Phosphatidylserine decarboxylase proenzyme, found in Xanthomonas oryzae pv. oryzae (strain MAFF 311018).